The chain runs to 75 residues: Peptide Ctri9610 (75 aa).

Positions 1–22 (MNSKYLFVFLILNVIFIDLCQG) are cleaved as a signal peptide. A Lysine amide modification is found at Lys41. A propeptide spanning residues 42–75 (GTRRRELGSQYDYLQDFRKRELDLDDLLSKFPDY) is cleaved from the precursor.

Belongs to the non-disulfide-bridged peptide (NDBP) superfamily. Short antimicrobial peptide (group 4) family. In terms of tissue distribution, expressed by the venom gland.

Its subcellular location is the secreted. The protein is Peptide Ctri9610 of Chaerilus tricostatus (Scorpion).